Here is a 266-residue protein sequence, read N- to C-terminus: NAD kinase 2 (266 aa).

Asp51 (proton acceptor) is an active-site residue. Residues 51–52, 123–124, Arg150, Asp152, 163–168, and Ala187 contribute to the NAD(+) site; these read DG, NE, and TGYSKS.

This sequence belongs to the NAD kinase family. It depends on a divalent metal cation as a cofactor.

The protein resides in the cytoplasm. It carries out the reaction NAD(+) + ATP = ADP + NADP(+) + H(+). In terms of biological role, involved in the regulation of the intracellular balance of NAD and NADP, and is a key enzyme in the biosynthesis of NADP. Catalyzes specifically the phosphorylation on 2'-hydroxyl of the adenosine moiety of NAD to yield NADP. In Oceanobacillus iheyensis (strain DSM 14371 / CIP 107618 / JCM 11309 / KCTC 3954 / HTE831), this protein is NAD kinase 2.